The chain runs to 999 residues: Probable metabotropic glutamate receptor mgl-1 (999 aa).

Residues Ser-202, 223-225, Tyr-273, Glu-363, and Lys-455 contribute to the L-glutamate site; that span reads AST. An N-linked (GlcNAc...) asparagine glycan is attached at Asn-518. 7 helical membrane passes run 682-704, 719-739, 751-769, 792-812, 836-857, 871-893, and 904-929; these read SLVPTILAVFGIIATLFVIVVYV, LSYILLISMIMCYCMTFVLLS, TGIGFAFSCLYSAMFVKTN, VVMTAMLAGVQLIGSLIWLSV, HHFLYSLAYDGFLIVLCTTYAV, FIGFSMYTTCVVWLSWIFFFFGT, and LCISISMSANVALACIFSPKLWIILF. Residues 975-999 form a disordered region; sequence DSTRRRSSRKTSQPTSTSSAHDTFL. Over residues 984 to 993 the composition is skewed to low complexity; it reads KTSQPTSTSS.

This sequence belongs to the G-protein coupled receptor 3 family.

It is found in the cell membrane. In terms of biological role, G-protein coupled receptor for glutamate. Ligand binding causes a conformation change that triggers signaling via guanine nucleotide-binding proteins (G proteins) and modulates the activity of down-stream effectors. This is Probable metabotropic glutamate receptor mgl-1 (mgl-1) from Caenorhabditis elegans.